The chain runs to 1059 residues: Carbamoyl phosphate synthase large chain (1059 aa).

The tract at residues 1–401 (MPKRSDIKKI…SLLKACRSLE (401 aa)) is carboxyphosphate synthetic domain. Residues arginine 129, arginine 169, glycine 175, glycine 176, arginine 208, isoleucine 210, glutamate 215, glycine 241, isoleucine 242, histidine 243, glutamine 284, and glutamate 298 each coordinate ATP. Residues 133 to 327 (KQLMEELEQP…IAKLAAKIAV (195 aa)) enclose the ATP-grasp 1 domain. Positions 284, 298, and 300 each coordinate Mg(2+). Mn(2+)-binding residues include glutamine 284, glutamate 298, and asparagine 300. The oligomerization domain stretch occupies residues 402 to 546 (IGVYHNEMSE…YSTYEWENES (145 aa)). Residues 547–929 (IKSDKESVIV…ALYKAFEASY (383 aa)) form a carbamoyl phosphate synthetic domain region. The 191-residue stretch at 671-861 (EQALKDLDIP…MAQVATNLIL (191 aa)) folds into the ATP-grasp 2 domain. The ATP site is built by arginine 707, serine 746, isoleucine 748, glutamate 752, glycine 777, valine 778, histidine 779, serine 780, glutamine 820, and glutamate 832. Mg(2+) contacts are provided by glutamine 820, glutamate 832, and asparagine 834. Mn(2+) contacts are provided by glutamine 820, glutamate 832, and asparagine 834. The 130-residue stretch at 930–1059 (LHLPTFGNVI…ESRSFTTEAI (130 aa)) folds into the MGS-like domain. The tract at residues 930–1059 (LHLPTFGNVI…ESRSFTTEAI (130 aa)) is allosteric domain.

Belongs to the CarB family. Composed of two chains; the small (or glutamine) chain promotes the hydrolysis of glutamine to ammonia, which is used by the large (or ammonia) chain to synthesize carbamoyl phosphate. Tetramer of heterodimers (alpha,beta)4. Mg(2+) is required as a cofactor. Mn(2+) serves as cofactor.

The catalysed reaction is hydrogencarbonate + L-glutamine + 2 ATP + H2O = carbamoyl phosphate + L-glutamate + 2 ADP + phosphate + 2 H(+). It catalyses the reaction hydrogencarbonate + NH4(+) + 2 ATP = carbamoyl phosphate + 2 ADP + phosphate + 2 H(+). It participates in amino-acid biosynthesis; L-arginine biosynthesis; carbamoyl phosphate from bicarbonate: step 1/1. Its pathway is pyrimidine metabolism; UMP biosynthesis via de novo pathway; (S)-dihydroorotate from bicarbonate: step 1/3. Large subunit of the glutamine-dependent carbamoyl phosphate synthetase (CPSase). CPSase catalyzes the formation of carbamoyl phosphate from the ammonia moiety of glutamine, carbonate, and phosphate donated by ATP, constituting the first step of 2 biosynthetic pathways, one leading to arginine and/or urea and the other to pyrimidine nucleotides. The large subunit (synthetase) binds the substrates ammonia (free or transferred from glutamine from the small subunit), hydrogencarbonate and ATP and carries out an ATP-coupled ligase reaction, activating hydrogencarbonate by forming carboxy phosphate which reacts with ammonia to form carbamoyl phosphate. This Streptococcus thermophilus (strain ATCC BAA-250 / LMG 18311) protein is Carbamoyl phosphate synthase large chain.